Here is a 635-residue protein sequence, read N- to C-terminus: Cationic amino acid transporter 4 (635 aa).

3 helical membrane passes run 42–62 (LTLLGVGGMVGSGLYVLTGAV), 66–86 (VAGPAVLLSFGVAAVASLLAA), and 113–133 (LWAFLIGWNVLLEYIIGGAAV). 2 N-linked (GlcNAc...) asparagine glycosylation sites follow: N151 and N195. Residues 197-217 (TFSAISLLVILFIVILGFILA) traverse the membrane as a helical segment. A glycan (N-linked (GlcNAc...) asparagine) is linked at N221. 5 helical membrane-spanning segments follow: residues 229-249 (FAPFGFSGVMAGTASCFYAFV), 270-290 (LAIAISLAIAAGAYILVSTVL), 318-338 (GFIVAAGSICAMNTVLLSLLF), 365-385 (QVPVAGTLAFGLLTAFLALLL), and 391-411 (VQFLSLGTLLAYTFVATSIIV). 2 positions are modified to phosphoserine: S422 and S427. Residues 478-498 (VTWALGVMLASAITIGCVLVF) traverse the membrane as a helical segment. N-linked (GlcNAc...) asparagine glycosylation occurs at N500. Transmembrane regions (helical) follow at residues 508–528 (WGYILLLLLTSVMFLLSLLVL), 539–559 (LFQIPMVPLIPALSIVLNICL), and 567–587 (TWVRFSIWLLMGLAVYFGYGI). Residue N601 is glycosylated (N-linked (GlcNAc...) asparagine).

The protein belongs to the amino acid-polyamine-organocation (APC) superfamily. Cationic amino acid transporter (CAT) (TC 2.A.3.3) family.

Its subcellular location is the membrane. In terms of biological role, involved in the transport of the cationic amino acids (arginine, lysine and ornithine). The polypeptide is Cationic amino acid transporter 4 (SLC7A4) (Homo sapiens (Human)).